Here is a 466-residue protein sequence, read N- to C-terminus: Fez family zinc finger protein 1 (466 aa).

Residues 34–49 (PLAFSIERIMSRTPEP) carry the Engrailed homology 1 repressor motif. 6 C2H2-type zinc fingers span residues 261 to 283 (FTCEVCGKVFNAHYNLTRHMPVH), 289 to 311 (FVCKICGKGFRQASTLCRHKIIH), 317 to 339 (HKCNQCGKAFNRSSTLNTHTRIH), 345 to 367 (FVCEFCGKGFHQKGNYKNHKLTH), 373 to 395 (FKCNICNKAFHQIYNLTFHMHTH), and 401 to 424 (FTCPTCGKGFCRNFDLKKHVRKLH). A disordered region spans residues 446-466 (LPNREQSHTIIQSPQLQKSVY). A compositionally biased stretch (polar residues) spans 453-466 (HTIIQSPQLQKSVY).

The protein belongs to the krueppel C2H2-type zinc-finger protein family.

Its subcellular location is the nucleus. Transcription repressor. Involved in the development of the forebrain region. In Xenopus laevis (African clawed frog), this protein is Fez family zinc finger protein 1 (fezf1).